The sequence spans 318 residues: Homoserine kinase (318 aa).

97–107 (PIGSGLGSSAC) contributes to the ATP binding site.

This sequence belongs to the GHMP kinase family. Homoserine kinase subfamily.

The protein localises to the cytoplasm. It catalyses the reaction L-homoserine + ATP = O-phospho-L-homoserine + ADP + H(+). The protein operates within amino-acid biosynthesis; L-threonine biosynthesis; L-threonine from L-aspartate: step 4/5. In terms of biological role, catalyzes the ATP-dependent phosphorylation of L-homoserine to L-homoserine phosphate. This chain is Homoserine kinase, found in Aliivibrio fischeri (strain ATCC 700601 / ES114) (Vibrio fischeri).